A 172-amino-acid chain; its full sequence is uncharacterized protein (172 aa).

This is an uncharacterized protein from Pasteurella multocida (strain Pm70).